Here is a 441-residue protein sequence, read N- to C-terminus: Tol-Pal system protein TolB (441 aa).

An N-terminal signal peptide occupies residues 1–23 (MRNAIATVLLGLAMLLPVGAVQA). The segment at 420-441 (RNLKPVKTPDGASDPSWSPLQN) is disordered.

It belongs to the TolB family. The Tol-Pal system is composed of five core proteins: the inner membrane proteins TolA, TolQ and TolR, the periplasmic protein TolB and the outer membrane protein Pal. They form a network linking the inner and outer membranes and the peptidoglycan layer.

It is found in the periplasm. Part of the Tol-Pal system, which plays a role in outer membrane invagination during cell division and is important for maintaining outer membrane integrity. The chain is Tol-Pal system protein TolB from Ruegeria sp. (strain TM1040) (Silicibacter sp.).